The following is a 113-amino-acid chain: Cytochrome c2 (113 aa).

4 residues coordinate heme c: C15, C18, H19, and M92.

It belongs to the cytochrome c family. Post-translationally, binds 1 heme c group covalently per subunit.

In terms of biological role, cytochrome c2 is found mainly in purple, non-sulfur, photosynthetic bacteria where it functions as the electron donor to the oxidized bacteriochlorophyll in the photophosphorylation pathway. However, it may also have a role in the respiratory chain and is found in some non-photosynthetic bacteria. The sequence is that of Cytochrome c2 from Pararhodospirillum photometricum (Rhodospirillum photometricum).